Reading from the N-terminus, the 124-residue chain is MVKLTSIVAGVAAIAAGVAAAPATTTLSPSDERVNLVELGVYVSDIRAHLAEYYMFQAAHPTETYPVEIAEAVFNYGDFTTMLTGIPADQVTRVITGVPWYSTRLRPAISSALSKDGIYTAVPN.

The first 20 residues, 1–20, serve as a signal peptide directing secretion; the sequence is MVKLTSIVAGVAAIAAGVAA.

Belongs to the SRP1/TIP1 family. Seripauperin subfamily. In terms of processing, O-glycosylated.

It is found in the secreted. Its subcellular location is the cell wall. Component of the cell wall. This chain is Seripauperin-23 (PAU23), found in Saccharomyces cerevisiae (strain ATCC 204508 / S288c) (Baker's yeast).